Reading from the N-terminus, the 106-residue chain is ATP-dependent Clp protease adapter protein ClpS (106 aa).

This sequence belongs to the ClpS family. Binds to the N-terminal domain of the chaperone ClpA.

Functionally, involved in the modulation of the specificity of the ClpAP-mediated ATP-dependent protein degradation. This is ATP-dependent Clp protease adapter protein ClpS from Aliivibrio fischeri (strain ATCC 700601 / ES114) (Vibrio fischeri).